We begin with the raw amino-acid sequence, 438 residues long: NADH-quinone oxidoreductase subunit D (438 aa).

The protein belongs to the complex I 49 kDa subunit family. NDH-1 is composed of 14 different subunits. Subunits NuoB, C, D, E, F, and G constitute the peripheral sector of the complex.

It localises to the cell membrane. The catalysed reaction is a quinone + NADH + 5 H(+)(in) = a quinol + NAD(+) + 4 H(+)(out). Functionally, NDH-1 shuttles electrons from NADH, via FMN and iron-sulfur (Fe-S) centers, to quinones in the respiratory chain. The immediate electron acceptor for the enzyme in this species is believed to be a menaquinone. Couples the redox reaction to proton translocation (for every two electrons transferred, four hydrogen ions are translocated across the cytoplasmic membrane), and thus conserves the redox energy in a proton gradient. This Rhodococcus jostii (strain RHA1) protein is NADH-quinone oxidoreductase subunit D.